Consider the following 158-residue polypeptide: Large ribosomal subunit protein uL15 (158 aa).

Residues 1 to 13 (MKLNEIKDNEGST) show a composition bias toward basic and acidic residues. A disordered region spans residues 1–45 (MKLNEIKDNEGSTHSRKRLGRGIGSGSGKTGGRGVKGQKSRSGVA). A compositionally biased stretch (gly residues) spans 21-35 (RGIGSGSGKTGGRGV).

It belongs to the universal ribosomal protein uL15 family. Part of the 50S ribosomal subunit.

In terms of biological role, binds to the 23S rRNA. This is Large ribosomal subunit protein uL15 from Rhizobium leguminosarum bv. trifolii (strain WSM2304).